The primary structure comprises 494 residues: Syntaphilin (494 aa).

The disordered stretch occupies residues 1 to 75 (MAMSLPGSRR…GIKPPTPEQY (75 aa)). Residues 7 to 49 (GSRRTSAGSRRRTSPPVSVRDAYGTSSLSSSSNSGSYKGSDSS) are compositionally biased toward low complexity. A coiled-coil region spans residues 79-161 (LQQKEVCIRH…VKNNLIDKDK (83 aa)). Disordered stretches follow at residues 191–246 (MAKE…SGFA) and 338–398 (CGTD…GQSV). Ser-200 and Ser-204 each carry phosphoserine. A compositionally biased stretch (polar residues) spans 207-217 (RSLTRSSTYTK). Position 214 is a phosphothreonine (Thr-214). Ser-219 carries the post-translational modification Phosphoserine. Over residues 230–246 (GDPSSGSAEDGADSGFA) the composition is skewed to low complexity. Residues 344-353 (SGDRCPELDA) are compositionally biased toward basic and acidic residues. The chain crosses the membrane as a helical span at residues 425–444 (YIVDLLAVVVPAVPTVAWLC).

In terms of assembly, binds to STX1A. Interacts with DNM1; this interaction inhibits the binding of DNM1 to AMPH and DNM1-receptor-mediated endocytosis. Brain specific. Found in synapses.

The protein localises to the membrane. Its subcellular location is the synapse. It is found in the synaptosome. In terms of biological role, inhibits SNARE complex formation by absorbing free STX1A. The sequence is that of Syntaphilin from Homo sapiens (Human).